The chain runs to 357 residues: G-protein coupled receptor 183 (357 aa).

The Extracellular segment spans residues 1–32; sequence MANNFTTPLAASHGNNCDLYAHHSTARILMPL. N-linked (GlcNAc...) asparagine glycosylation is present at Asn4. A helical transmembrane segment spans residues 33-53; it reads HYSLVFIIGLVGNLLALVVIV. Residues 54–68 lie on the Cytoplasmic side of the membrane; that stretch reads QNRKKINSTTLYSMN. The helical transmembrane segment at 69 to 89 threads the bilayer; the sequence is LVISDILFTTALPTRIVYYAL. Arg83 contributes to the 7alpha,25-dihydroxycholesterol binding site. The Extracellular segment spans residues 90–101; sequence GFDWRIGDALCR. Cysteines 100 and 177 form a disulfide. A helical transmembrane segment spans residues 102–122; sequence ITALLFYINTYAGVNFMTCLS. The 7alpha,25-dihydroxycholesterol site is built by Tyr108 and Tyr112. The tract at residues 122 to 130 is interaction with G proteins; that stretch reads SIDRFFAVV. Over 123-143 the chain is Cytoplasmic; the sequence is IDRFFAVVHPLRYNKIKRIEY. A helical membrane pass occupies residues 144-164; the sequence is AKGICVFVWILVFAQTLPLLL. At 165 to 190 the chain is on the extracellular side; that stretch reads KPMSKQEADKTTCMEYPNFEGTASLP. Residues 191 to 211 form a helical membrane-spanning segment; it reads WILLGACLLGYVLPLAIILLC. Residues 212–240 are Cytoplasmic-facing; the sequence is YSQICCKLFRTAKQNPLTEKSGVNKKALN. The helical transmembrane segment at 241-261 threads the bilayer; sequence TIILIIGVFVLCFTPYHVAIM. A 7alpha,25-dihydroxycholesterol-binding site is contributed by Tyr256. At 262–287 the chain is on the extracellular side; sequence QHMVKTLYAPGALGCGVRHSFQISLH. Residues 288 to 308 form a helical membrane-spanning segment; the sequence is FTVCLMNFNCCMDPFIYFFAC. Over 309-357 the chain is Cytoplasmic; sequence KGYKRKVMKMLKRQVSVSISSAVRSAPEENSREMTESQMMIHSKASNGR. 2 positions are modified to phosphoserine: Ser324 and Ser345. The interval 336 to 357 is disordered; it reads EENSREMTESQMMIHSKASNGR. Residues 344–357 are compositionally biased toward polar residues; the sequence is ESQMMIHSKASNGR.

The protein belongs to the G-protein coupled receptor 1 family. In terms of assembly, homodimer and heterodimer. Heterodimerizes with CXCR5; leading to modulate the interaction between of CXCL13 and CXCR5.

Its subcellular location is the cell membrane. Its function is as follows. G-protein coupled receptor expressed in lymphocytes that acts as a chemotactic receptor for B-cells, T-cells, splenic dendritic cells, monocytes/macrophages and astrocytes. Receptor for oxysterol 7-alpha,25-dihydroxycholesterol (7-alpha,25-OHC) and other related oxysterols. Mediates cell positioning and movement of a number of cells by binding the 7-alpha,25-OHC ligand that forms a chemotactic gradient. Binding of 7-alpha,25-OHC mediates the correct localization of B-cells during humoral immune responses. Guides B-cell movement along the B-cell zone-T-cell zone boundary and later to interfollicular and outer follicular regions. Its specific expression during B-cell maturation helps position B-cells appropriately for mounting T-dependent antibody responses. Collaborates with CXCR5 to mediate B-cell migration; probably by forming a heterodimer with CXCR5 that affects the interaction between of CXCL13 and CXCR5. Also acts as a chemotactic receptor for some T-cells upon binding to 7-alpha,25-OHC ligand. Promotes follicular helper T (Tfh) cells differentiation by positioning activated T-cells at the follicle-T-zone interface, promoting contact of newly activated CD4 T-cells with activated dendritic cells and exposing them to Tfh-cell-promoting inducible costimulator (ICOS) ligand. Expression in splenic dendritic cells is required for their homeostasis, localization and ability to induce B- and T-cell responses: GPR183 acts as a chemotactic receptor in dendritic cells that mediates the accumulation of CD4(+) dendritic cells in bridging channels. Regulates migration of astrocytes and is involved in communication between astrocytes and macrophages. Promotes osteoclast precursor migration to bone surfaces. Signals constitutively through G(i)-alpha, but not G(s)-alpha or G(q)-alpha. Signals constitutively also via MAPK1/3 (ERK1/2). In Rattus norvegicus (Rat), this protein is G-protein coupled receptor 183 (Gpr183).